The primary structure comprises 397 residues: Glia-derived nexin (397 aa).

The first 19 residues, 1–19 (MNWHFPFFILTTVTLYSVH), serve as a signal peptide directing secretion. Asn159 is a glycosylation site (N-linked (GlcNAc...) asparagine).

It belongs to the serpin family. Most abundant in seminal vesicles.

The protein resides in the secreted. It is found in the extracellular space. In terms of biological role, serine protease inhibitor with activity toward thrombin, trypsin, and urokinase. Promotes neurite extension by inhibiting thrombin. Binds heparin. The polypeptide is Glia-derived nexin (Serpine2) (Mus musculus (Mouse)).